The sequence spans 361 residues: 3-dehydroquinate synthase (361 aa).

Residues 72-77 (SGEKEK), 130-131 (TT), Lys-142, and Lys-151 each bind NAD(+). Zn(2+)-binding residues include Glu-184, His-247, and His-264.

Belongs to the sugar phosphate cyclases superfamily. Dehydroquinate synthase family. The cofactor is Co(2+). Zn(2+) is required as a cofactor. NAD(+) serves as cofactor.

It localises to the cytoplasm. The catalysed reaction is 7-phospho-2-dehydro-3-deoxy-D-arabino-heptonate = 3-dehydroquinate + phosphate. The protein operates within metabolic intermediate biosynthesis; chorismate biosynthesis; chorismate from D-erythrose 4-phosphate and phosphoenolpyruvate: step 2/7. Catalyzes the conversion of 3-deoxy-D-arabino-heptulosonate 7-phosphate (DAHP) to dehydroquinate (DHQ). In Bacillus cereus (strain ZK / E33L), this protein is 3-dehydroquinate synthase.